We begin with the raw amino-acid sequence, 385 residues long: MGKRDYYEVLGVGKTASEDEIKKAYRKLAMKHHPDRNQGDGAKASEEKFKEAKEAYEMLSDAQKRAAYDQFGHAGVDPNAGGAGFRPGAGGEGYGGFAEAFGDIFGDIFGQQGGGGRRGAGGQQVYRGADLSYAMEITLEEAAHGKESQIRIPTWEECDTCHGSGAKPGTSAKPCTTCHGAGTVHLRQGFFSIQQTCPHCHGSGKIIPEPCTSCNGAGKVKKQKTLEVKIPAGINEGQRIALRGHGEPGTQGGPAGDLYVEIRIKQHEIFERDSDDLHCTVPVPLTTAALGGAIEVPTLSGSAEIELPEGTQHGKTFRLRGKGIKGIRSNYPGDLYCHVSVETPVKLTEHQRKLLKELDESFRKGGDKHSPTSKSWTDRVKDLFK.

Positions 5-72 (DYYEVLGVGK…QKRAAYDQFG (68 aa)) constitute a J domain. The segment at 26 to 48 (RKLAMKHHPDRNQGDGAKASEEK) is disordered. Over residues 35 to 48 (DRNQGDGAKASEEK) the composition is skewed to basic and acidic residues. The CR-type zinc-finger motif lies at 145-223 (GKESQIRIPT…CNGAGKVKKQ (79 aa)). Residues cysteine 158, cysteine 161, cysteine 175, cysteine 178, cysteine 197, cysteine 200, cysteine 211, and cysteine 214 each coordinate Zn(2+). 4 CXXCXGXG motif repeats span residues 158–165 (CDTCHGSG), 175–182 (CTTCHGAG), 197–204 (CPHCHGSG), and 211–218 (CTSCNGAG). A disordered region spans residues 362–385 (FRKGGDKHSPTSKSWTDRVKDLFK).

It belongs to the DnaJ family. In terms of assembly, homodimer. The cofactor is Zn(2+).

The protein localises to the cytoplasm. Its function is as follows. Participates actively in the response to hyperosmotic and heat shock by preventing the aggregation of stress-denatured proteins and by disaggregating proteins, also in an autonomous, DnaK-independent fashion. Unfolded proteins bind initially to DnaJ; upon interaction with the DnaJ-bound protein, DnaK hydrolyzes its bound ATP, resulting in the formation of a stable complex. GrpE releases ADP from DnaK; ATP binding to DnaK triggers the release of the substrate protein, thus completing the reaction cycle. Several rounds of ATP-dependent interactions between DnaJ, DnaK and GrpE are required for fully efficient folding. Also involved, together with DnaK and GrpE, in the DNA replication of plasmids through activation of initiation proteins. The polypeptide is Chaperone protein DnaJ (Leptothrix cholodnii (strain ATCC 51168 / LMG 8142 / SP-6) (Leptothrix discophora (strain SP-6))).